The primary structure comprises 873 residues: Probable beta-glucosidase A (873 aa).

Positions 1 to 19 are cleaved as a signal peptide; that stretch reads MRFGWLEVAALTAASVANA. Residues Asn71, Asn222, and Asn263 are each glycosylated (N-linked (GlcNAc...) asparagine). Asp291 is a catalytic residue. 9 N-linked (GlcNAc...) asparagine glycosylation sites follow: Asn326, Asn333, Asn365, Asn453, Asn534, Asn553, Asn575, Asn679, and Asn725. The segment at 731 to 764 is disordered; it reads DSSDDPNYGWQDSEYIPEGARDGSPQPLLKAGGA.

This sequence belongs to the glycosyl hydrolase 3 family.

Its subcellular location is the secreted. The enzyme catalyses Hydrolysis of terminal, non-reducing beta-D-glucosyl residues with release of beta-D-glucose.. The protein operates within glycan metabolism; cellulose degradation. Its function is as follows. Beta-glucosidases are one of a number of cellulolytic enzymes involved in the degradation of cellulosic biomass. Catalyzes the last step releasing glucose from the inhibitory cellobiose. In Aspergillus fumigatus (strain ATCC MYA-4609 / CBS 101355 / FGSC A1100 / Af293) (Neosartorya fumigata), this protein is Probable beta-glucosidase A (bglA).